Consider the following 423-residue polypeptide: UPF0229 protein Pfl01_5140 (423 aa).

The tract at residues 83–108 (TAGEHIARPPGGGGGRGPGKAGNSGE) is disordered. Gly residues predominate over residues 92–107 (PGGGGGRGPGKAGNSG).

It belongs to the UPF0229 family.

The protein is UPF0229 protein Pfl01_5140 of Pseudomonas fluorescens (strain Pf0-1).